Here is a 163-residue protein sequence, read N- to C-terminus: MEQSELGFIEKVVSLNRVAKVVKGGRRFSFSALVVVGDGKGSVGFGLGKAQEVPEALRKATEQARKAMMKIPLIEGTLPYEILGEFGAGSVMLKPASRGTGIIAGGAVRAIMEAAGVTDVLAKAIGTNNPHNVLRATMAGLSALRSAQLVSNIRGKLLEAPRK.

One can recognise an S5 DRBM domain in the interval 8-71; that stretch reads FIEKVVSLNR…EQARKAMMKI (64 aa).

The protein belongs to the universal ribosomal protein uS5 family. Part of the 30S ribosomal subunit. Contacts proteins S4 and S8.

With S4 and S12 plays an important role in translational accuracy. In terms of biological role, located at the back of the 30S subunit body where it stabilizes the conformation of the head with respect to the body. In Lawsonia intracellularis (strain PHE/MN1-00), this protein is Small ribosomal subunit protein uS5.